The primary structure comprises 554 residues: uncharacterized protein (554 aa).

This is an uncharacterized protein from Acidianus sp. F28 (AFV-2).